The sequence spans 219 residues: MGRRPARCYRQIKNKPYPKSRYCRGVPDPKIRIYDVGMKKKGVDEFSHCVHLVSWEKENVTSEALEAARIACNKYMTKSAGKDAFHLRVRVHPFHVLRINKMLSCAGADRLQTGMRGAFGKPQGTCARVDIGQVLLSVRCKPNNAVHASEALRRAKFKFPGRQKIIESRKWGFTKFSRDEYVRLKSEGRIMPDGVNAKLLGCHGRLSARAPGKAFLSAA.

The protein belongs to the universal ribosomal protein uL16 family. Component of the small ribosomal subunit. Mature ribosomes consist of a small (40S) and a large (60S) subunit. The 40S subunit contains about 33 different proteins and 1 molecule of RNA (18S). The 60S subunit contains about 49 different proteins and 3 molecules of RNA (25S, 5.8S and 5S).

The sequence is that of Large ribosomal subunit protein uL16y (SG12) from Oryza sativa subsp. japonica (Rice).